A 184-amino-acid chain; its full sequence is Shikimate kinase (184 aa).

Position 12-17 (12-17 (GSGKST)) interacts with ATP. Residue serine 16 participates in Mg(2+) binding. Residues aspartate 34, arginine 58, and glycine 80 each coordinate substrate. Arginine 117 provides a ligand contact to ATP. Position 136 (arginine 136) interacts with substrate. Arginine 153 contributes to the ATP binding site. The disordered stretch occupies residues 163-184 (MSRLDDPTPNTSPSSTASGAAT). Residues 169-184 (PTPNTSPSSTASGAAT) are compositionally biased toward low complexity.

This sequence belongs to the shikimate kinase family. As to quaternary structure, monomer. Requires Mg(2+) as cofactor.

It localises to the cytoplasm. The enzyme catalyses shikimate + ATP = 3-phosphoshikimate + ADP + H(+). It functions in the pathway metabolic intermediate biosynthesis; chorismate biosynthesis; chorismate from D-erythrose 4-phosphate and phosphoenolpyruvate: step 5/7. Its function is as follows. Catalyzes the specific phosphorylation of the 3-hydroxyl group of shikimic acid using ATP as a cosubstrate. In Mycobacterium marinum (strain ATCC BAA-535 / M), this protein is Shikimate kinase.